Reading from the N-terminus, the 97-residue chain is Large ribosomal subunit protein uL23 (97 aa).

Belongs to the universal ribosomal protein uL23 family. As to quaternary structure, part of the 50S ribosomal subunit. Contacts protein L29, and trigger factor when it is bound to the ribosome.

Its function is as follows. One of the early assembly proteins it binds 23S rRNA. One of the proteins that surrounds the polypeptide exit tunnel on the outside of the ribosome. Forms the main docking site for trigger factor binding to the ribosome. The protein is Large ribosomal subunit protein uL23 of Clostridium perfringens (strain SM101 / Type A).